A 451-amino-acid chain; its full sequence is UDP-N-acetylmuramate--L-alanine ligase (451 aa).

ATP is bound at residue 110-116; the sequence is GTHGKTT.

Belongs to the MurCDEF family.

It localises to the cytoplasm. The catalysed reaction is UDP-N-acetyl-alpha-D-muramate + L-alanine + ATP = UDP-N-acetyl-alpha-D-muramoyl-L-alanine + ADP + phosphate + H(+). It participates in cell wall biogenesis; peptidoglycan biosynthesis. Its function is as follows. Cell wall formation. The sequence is that of UDP-N-acetylmuramate--L-alanine ligase from Francisella tularensis subsp. mediasiatica (strain FSC147).